Here is a 171-residue protein sequence, read N- to C-terminus: Transcription elongation factor GreB (171 aa).

Residues lysine 53–isoleucine 75 adopt a coiled-coil conformation.

It belongs to the GreA/GreB family. GreB subfamily.

In terms of biological role, necessary for efficient RNA polymerase transcription elongation past template-encoded arresting sites. The arresting sites in DNA have the property of trapping a certain fraction of elongating RNA polymerases that pass through, resulting in locked ternary complexes. Cleavage of the nascent transcript by cleavage factors such as GreA or GreB allows the resumption of elongation from the new 3'terminus. GreB releases sequences of up to 9 nucleotides in length. This is Transcription elongation factor GreB from Yersinia pestis.